Here is a 365-residue protein sequence, read N- to C-terminus: Glial fibrillary acidic protein (365 aa).

Residues 1–5 are head; that stretch reads REVDR. Residues 2–310 form the IF rod domain; it reads EVDRVMGLND…KLLEGEESRI (309 aa). The coil 1A stretch occupies residues 6 to 37; the sequence is VMGLNDRFASYIEKVRFLEQQNKMLVAELNQL. Residues 38 to 48 form a linker 1 region; sequence RGKEPSRLGDI. The interval 49–147 is coil 1B; it reads YQEELRELRR…EEEMRQLQEQ (99 aa). Residues 148–163 form a linker 12 region; the sequence is LIAQQVHVDLDVSKPD. A coil 2A region spans residues 164-185; that stretch reads LTTALKEIRAQFEAMATSNMQE. Residues 186–189 form a linker 2 region; the sequence is TEEW. Residues 190–310 form a coil 2B region; it reads YRSKFADLTD…KLLEGEESRI (121 aa). The segment at 311–365 is tail; it reads TVPVQNFTNLQFRDTSLDTKLTPEAHVKRSIVVRTVETRDGEIIKESTTERKDLP.

It belongs to the intermediate filament family.

The polypeptide is Glial fibrillary acidic protein (gfap) (Carassius auratus (Goldfish)).